A 417-amino-acid chain; its full sequence is Pre-mRNA-splicing factor PRP46 (417 aa).

WD repeat units lie at residues 119–159 (AHQG…LKAT), 162–201 (GHIM…SSSG), 209–248 (GHVG…EIMV), 251–290 (GHRS…TQLA), 293–334 (HHSK…NEFG), 337–376 (GENK…LLQS), and 385–417 (STES…WGEE).

This sequence belongs to the WD repeat PRL1/PRL2 family. In terms of assembly, associated with the spliceosome.

The protein resides in the cytoplasm. It is found in the nucleus. Involved in pre-mRNA splicing and required for cell cycle progression at G2/M. In Debaryomyces hansenii (strain ATCC 36239 / CBS 767 / BCRC 21394 / JCM 1990 / NBRC 0083 / IGC 2968) (Yeast), this protein is Pre-mRNA-splicing factor PRP46 (PRP46).